A 270-amino-acid polypeptide reads, in one-letter code: Transcription factor PU.1 (270 aa).

Residues 124–162 form a disordered region; sequence LSPAQPSSDEEEGERQSPPLEVSDGEADGLEPGPGLLHG. Residues serine 140 and serine 146 each carry the phosphoserine modification. Residues 153 to 162 are compositionally biased toward low complexity; the sequence is LEPGPGLLHG. The ETS DNA-binding region spans 170–253; it reads IRLYQFLLDL…VKKKLTYQFS (84 aa). Lysine 217, arginine 230, arginine 233, and lysine 243 together coordinate DNA.

This sequence belongs to the ETS family. As to quaternary structure, binds DNA as a monomer. Can form homomers. Directly interacts with CEBPD/NF-IL6-beta; this interaction does not affect DNA-binding properties of each partner. Interacts with NONO/p54(nrb). Interacts with RUNX1/AML1. Interacts with GFI1; the interaction represses SPI1 transcriptional activity, hence blocks SPI1-induced macrophage differentiation of myeloid progenitor cells. Interacts with CEBPE. Interacts with IRF4/Pip and IRF8. Interacts with JUN. Interacts with RB1. Interacts with TBP.

It localises to the nucleus. Its activity is regulated as follows. Transcriptional activity at macrophage-specific genes is inhibited by interaction with GFI1, which results in the inhibition of SPI1-induced macrophage differentiation of myeloid progenitor cells, but not that of the granulocyte lineage. Pioneer transcription factor, which controls hematopoietic cell fate by decompacting stem cell heterochromatin and allowing other transcription factors to enter otherwise inaccessible genomic sites. Once in open chromatin, can directly control gene expression by binding genetic regulatory elements and can also more broadly influence transcription by recruiting transcription factors, such as interferon regulatory factors (IRFs), to otherwise inaccessible genomic regions. Transcriptionally activates genes important for myeloid and lymphoid lineages, such as CSF1R. Transcriptional activation from certain promoters, possibly containing low affinity binding sites, is achieved cooperatively with other transcription factors. FCER1A transactivation is achieved in cooperation with GATA1. May be particularly important for the pro- to pre-B cell transition. Binds (via the ETS domain) onto the purine-rich DNA core sequence 5'-GAGGAA-3', also known as the PU-box. In vitro can bind RNA and interfere with pre-mRNA splicing. This chain is Transcription factor PU.1 (SPI1), found in Sus scrofa (Pig).